The primary structure comprises 426 residues: GTPase Obg (426 aa).

One can recognise an Obg domain in the interval 1 to 158 (MFVDEVEIKV…RSIRLELKLV (158 aa)). Positions 159-330 (ADVGLIGFPN…LIYYTGDLLK (172 aa)) constitute an OBG-type G domain. Residues 165-172 (GFPNVGKS), 190-194 (FTTLK), 212-215 (DIPG), 282-285 (NKID), and 311-313 (SAA) contribute to the GTP site. Residues serine 172 and threonine 192 each contribute to the Mg(2+) site. In terms of domain architecture, OCT spans 349-426 (DFADEEENIV…IGPMEFEYME (78 aa)).

The protein belongs to the TRAFAC class OBG-HflX-like GTPase superfamily. OBG GTPase family. In terms of assembly, monomer. Mg(2+) is required as a cofactor.

The protein resides in the cytoplasm. Functionally, an essential GTPase which binds GTP, GDP and possibly (p)ppGpp with moderate affinity, with high nucleotide exchange rates and a fairly low GTP hydrolysis rate. Plays a role in control of the cell cycle, stress response, ribosome biogenesis and in those bacteria that undergo differentiation, in morphogenesis control. The protein is GTPase Obg of Halothermothrix orenii (strain H 168 / OCM 544 / DSM 9562).